The sequence spans 248 residues: Probable transcriptional regulatory protein PP_1214 (248 aa).

The disordered stretch occupies residues 1–21 (MAGHSKWANIKHRKERQDAKR).

It belongs to the TACO1 family.

The protein resides in the cytoplasm. This Pseudomonas putida (strain ATCC 47054 / DSM 6125 / CFBP 8728 / NCIMB 11950 / KT2440) protein is Probable transcriptional regulatory protein PP_1214.